A 519-amino-acid chain; its full sequence is Asteroid homolog 1 (519 aa).

This sequence belongs to the asteroid family.

It localises to the cytoplasm. It is found in the mitochondrion. The protein is Asteroid homolog 1 (ast1) of Schizosaccharomyces pombe (strain 972 / ATCC 24843) (Fission yeast).